Here is a 196-residue protein sequence, read N- to C-terminus: Penicillin-binding protein activator LpoB (196 aa).

The N-terminal stretch at 1 to 16 (MKKYLGIVLMALVIAG) is a signal peptide. C17 carries N-palmitoyl cysteine lipidation. Residue C17 is the site of S-diacylglycerol cysteine attachment. The interval 24 to 54 (TEQPATIEPAVPTPSKPQLPPSESQPLPTPP) is disordered. The span at 34–43 (VPTPSKPQLP) shows a compositional bias: pro residues.

The protein belongs to the LpoB family. Interacts with PBP1b.

Its subcellular location is the cell outer membrane. In terms of biological role, regulator of peptidoglycan synthesis that is essential for the function of penicillin-binding protein 1B (PBP1b). The protein is Penicillin-binding protein activator LpoB of Dickeya dadantii (strain 3937) (Erwinia chrysanthemi (strain 3937)).